Here is a 362-residue protein sequence, read N- to C-terminus: Holliday junction branch migration complex subunit RuvB (362 aa).

The large ATPase domain (RuvB-L) stretch occupies residues 4–186 (PDRPQRLVEQ…FGIPLRMQFY (183 aa)). ATP contacts are provided by residues I25, R26, G67, K70, T71, T72, 133–135 (EDF), R176, Y186, and R223. T71 serves as a coordination point for Mg(2+). The segment at 187 to 257 (EPEELQLIVA…AAGGALTRLE (71 aa)) is small ATPAse domain (RuvB-S). The head domain (RuvB-H) stretch occupies residues 260–362 (RLGFDAMDRR…GTPEGEGEDV (103 aa)). DNA-binding residues include R296, R315, and R320.

Belongs to the RuvB family. As to quaternary structure, homohexamer. Forms an RuvA(8)-RuvB(12)-Holliday junction (HJ) complex. HJ DNA is sandwiched between 2 RuvA tetramers; dsDNA enters through RuvA and exits via RuvB. An RuvB hexamer assembles on each DNA strand where it exits the tetramer. Each RuvB hexamer is contacted by two RuvA subunits (via domain III) on 2 adjacent RuvB subunits; this complex drives branch migration. In the full resolvosome a probable DNA-RuvA(4)-RuvB(12)-RuvC(2) complex forms which resolves the HJ.

It is found in the cytoplasm. It catalyses the reaction ATP + H2O = ADP + phosphate + H(+). In terms of biological role, the RuvA-RuvB-RuvC complex processes Holliday junction (HJ) DNA during genetic recombination and DNA repair, while the RuvA-RuvB complex plays an important role in the rescue of blocked DNA replication forks via replication fork reversal (RFR). RuvA specifically binds to HJ cruciform DNA, conferring on it an open structure. The RuvB hexamer acts as an ATP-dependent pump, pulling dsDNA into and through the RuvAB complex. RuvB forms 2 homohexamers on either side of HJ DNA bound by 1 or 2 RuvA tetramers; 4 subunits per hexamer contact DNA at a time. Coordinated motions by a converter formed by DNA-disengaged RuvB subunits stimulates ATP hydrolysis and nucleotide exchange. Immobilization of the converter enables RuvB to convert the ATP-contained energy into a lever motion, pulling 2 nucleotides of DNA out of the RuvA tetramer per ATP hydrolyzed, thus driving DNA branch migration. The RuvB motors rotate together with the DNA substrate, which together with the progressing nucleotide cycle form the mechanistic basis for DNA recombination by continuous HJ branch migration. Branch migration allows RuvC to scan DNA until it finds its consensus sequence, where it cleaves and resolves cruciform DNA. This Rhodospirillum centenum (strain ATCC 51521 / SW) protein is Holliday junction branch migration complex subunit RuvB.